The chain runs to 759 residues: Glycerophosphodiester phosphodiesterase GDPDL3 (759 aa).

Positions 1 to 27 (MRGLLRASSLLLCGVILIQLLAAQIHA) are cleaved as a signal peptide. Topologically, residues 28–738 (QSKKPKSPWP…TNAQAPSGQT (711 aa)) are extracellular. Residues 44-344 (PLVIARGGFS…DFPITASASL (301 aa)) enclose the GP-PDE 1 domain. Asn-99, Asn-186, Asn-242, Asn-251, Asn-326, Asn-353, Asn-413, Asn-424, Asn-488, Asn-528, Asn-540, and Asn-647 each carry an N-linked (GlcNAc...) asparagine glycan. Positions 360 to 661 (FLVITKDGAS…EFPFTAARYK (302 aa)) constitute a GP-PDE 2 domain. A disordered region spans residues 702–734 (FTDADVTEPPLPPVTAKAPTSSPGTPSTNAQAP). Residues 719-734 (APTSSPGTPSTNAQAP) show a composition bias toward polar residues. Residues 739–759 (RITLSLLLSVFAMVLASLLLL) traverse the membrane as a helical segment.

Belongs to the glycerophosphoryl diester phosphodiesterase family. In terms of tissue distribution, expressed in roots, shoots, rosette and cauline leaves, stems, flowers and siliques.

Its subcellular location is the cell membrane. It catalyses the reaction a sn-glycero-3-phosphodiester + H2O = an alcohol + sn-glycerol 3-phosphate + H(+). Its function is as follows. Involved in primary cell wall organization. Required for the accumulation of crystalline cellulose. The sequence is that of Glycerophosphodiester phosphodiesterase GDPDL3 from Arabidopsis thaliana (Mouse-ear cress).